The chain runs to 677 residues: Zinc finger CCCH domain-containing protein 23 (677 aa).

Residues proline 66 to glycine 117 are disordered. A compositionally biased stretch (low complexity) spans alanine 69 to proline 82. A compositionally biased stretch (polar residues) spans proline 98–methionine 113. Residues glycine 228–leucine 255 form a C3H1-type zinc finger. In terms of domain architecture, RRM spans arginine 359–lysine 435. Residues alanine 480–glutamine 513 adopt a coiled-coil conformation. Polar residues predominate over residues threonine 535–leucine 562. Residues threonine 535 to alanine 607 form a disordered region. Basic and acidic residues predominate over residues arginine 589–leucine 601.

This is Zinc finger CCCH domain-containing protein 23 from Oryza sativa subsp. japonica (Rice).